Consider the following 475-residue polypeptide: ATP synthase subunit beta, chloroplastic (475 aa).

Residue 155 to 162 coordinates ATP; it reads GGAGVGKT.

It belongs to the ATPase alpha/beta chains family. In terms of assembly, F-type ATPases have 2 components, CF(1) - the catalytic core - and CF(0) - the membrane proton channel. CF(1) has five subunits: alpha(3), beta(3), gamma(1), delta(1), epsilon(1). CF(0) has four main subunits: a(1), b(1), b'(1) and c(9-12).

The protein localises to the plastid. Its subcellular location is the chloroplast thylakoid membrane. It carries out the reaction ATP + H2O + 4 H(+)(in) = ADP + phosphate + 5 H(+)(out). Functionally, produces ATP from ADP in the presence of a proton gradient across the membrane. The catalytic sites are hosted primarily by the beta subunits. The chain is ATP synthase subunit beta, chloroplastic from Porphyra purpurea (Red seaweed).